Here is a 365-residue protein sequence, read N- to C-terminus: uncharacterized protein (365 aa).

This sequence belongs to the mycobacterial PPE family.

This is an uncharacterized protein from Mycobacterium tuberculosis (strain ATCC 25618 / H37Rv).